A 187-amino-acid polypeptide reads, in one-letter code: Prepronociceptin (187 aa).

An N-terminal signal peptide occupies residues 1-19; it reads MKILFCDVLLLSLLSSVFS. A propeptide spanning residues 20 to 95 is cleaved from the precursor; that stretch reads SCPRDCLTCQ…QPKASEMQHL (76 aa). Repeat copies occupy residues 109–114, 115–120, and 121–126. Residues 109–126 form a 3 X 6 AA tandem repeats of D-A-E-P-G-A region; that stretch reads DAEPGADAEPGADAEPGA. Residues 109 to 133 are disordered; the sequence is DAEPGADAEPGADAEPGADDAEEVE. Over residues 112–131 the composition is skewed to acidic residues; the sequence is PGADAEPGADAEPGADDAEE. Positions 180-187 are excised as a propeptide; it reads TLHQNGNV.

The protein belongs to the opioid neuropeptide precursor family. In terms of processing, specific enzymatic cleavages at paired basic residues probably yield other active peptides besides nociceptin. Post-translationally, the N-terminal domain contains 6 conserved cysteines thought to be involved in disulfide bonding and/or processing. Brain and spinal cord. Low levels in kidney and spleen.

The protein resides in the secreted. Functionally, ligand of the opioid receptor-like receptor OPRL1. It may act as a transmitter in the brain by modulating nociceptive and locomotor behavior. May be involved in neuronal differentiation and development. When administered intracerebroventricularly, nociceptin induces hyperalgesia and decreases locomotor activity. In terms of biological role, blocks nociceptin action in pain transmission by inhibiting nociceptin-induced hyperalgesia and allodynia. Its function is as follows. Has potent analgesic activity. This Mus musculus (Mouse) protein is Prepronociceptin (Pnoc).